A 317-amino-acid chain; its full sequence is CXXC-type zinc finger protein 5 (317 aa).

The segment covering 1–10 (MSSLGGGSQD) has biased composition (gly residues). The disordered stretch occupies residues 1–92 (MSSLGGGSQD…SFGSSGGGGS (92 aa)). Low complexity-rich tracts occupy residues 11–27 (AGGSSSSSNTNSSSGSG) and 36–51 (STAVAATTAPTSVADD). The CXXC-type zinc finger occupies 251–292 (GKKKRKRCGMCAPCRRRINCEQCSSCRNRKTGHQICKFRKCE). Positions 252–257 (KKKRKR) match the Nuclear localization signal motif. Residues Cys-258, Cys-261, Cys-264, Cys-270, Cys-273, Cys-276, Cys-286, and Cys-291 each coordinate Zn(2+).

In terms of assembly, interacts with DVL1. Interacts with RBPJ.

It is found in the nucleus. The protein resides in the cytoplasm. May indirectly participate in activation of the NF-kappa-B and MAPK pathways. Acts as a mediator of BMP4-mediated modulation of canonical Wnt signaling activity in neural stem cells. Required for DNA damage-induced ATM phosphorylation, p53 activation and cell cycle arrest. Involved in myelopoiesis. Binds to the oxygen responsive element of COX4I2 and represses its transcription under hypoxia conditions (4% oxygen), as well as normoxia conditions (20% oxygen). May repress COX4I2 transactivation induced by CHCHD2 and RBPJ. Binds preferentially to DNA containing cytidine-phosphate-guanosine (CpG) dinucleotides over CpH (H=A, T, and C), hemimethylated-CpG and hemimethylated-hydroxymethyl-CpG. The protein is CXXC-type zinc finger protein 5 (Cxxc5) of Mus musculus (Mouse).